Consider the following 434-residue polypeptide: UDP-glucuronate 4-epimerase 2 (434 aa).

Helical transmembrane passes span 32–52 and 91–111; these read SVAK…IFFY and GVSV…SAAL. 93–124 lines the NAD(+) pocket; it reads SVLVTGAAGFVGTHVSAALKRRGDGVLGLDNF. Residue Tyr-243 is the Proton acceptor of the active site.

Belongs to the NAD(P)-dependent epimerase/dehydratase family. Homodimer. In roots, leaves, siliques, flowers, pollen and stems.

The protein localises to the golgi apparatus. Its subcellular location is the golgi stack membrane. It carries out the reaction UDP-alpha-D-glucuronate = UDP-alpha-D-galacturonate. Functionally, involved in the synthesis of the negatively charged monosaccharide that forms the backbone of pectic cell wall components. This is UDP-glucuronate 4-epimerase 2 (GAE2) from Arabidopsis thaliana (Mouse-ear cress).